Reading from the N-terminus, the 989-residue chain is DNA-directed RNA polymerase subunit beta' (989 aa).

Mg(2+) contacts are provided by Asp-383, Asp-385, and Asp-387.

It belongs to the RNA polymerase beta' chain family. As to quaternary structure, the RNAP catalytic core consists of 2 alpha, 1 beta, 1 beta' and 1 omega subunit. When a sigma factor is associated with the core the holoenzyme is formed, which can initiate transcription. It depends on Mg(2+) as a cofactor.

It catalyses the reaction RNA(n) + a ribonucleoside 5'-triphosphate = RNA(n+1) + diphosphate. Functionally, DNA-dependent RNA polymerase catalyzes the transcription of DNA into RNA using the four ribonucleoside triphosphates as substrates. This chain is DNA-directed RNA polymerase subunit beta' (rpoC), found in Leuconostoc pseudomesenteroides.